A 427-amino-acid polypeptide reads, in one-letter code: uncharacterized protein (427 aa).

The protein belongs to the CAF1 family.

This is an uncharacterized protein from Schizosaccharomyces pombe (strain 972 / ATCC 24843) (Fission yeast).